Consider the following 279-residue polypeptide: Probable autolysin LDP (279 aa).

Residues 1 to 24 (MKKSLTVTVSSVLAFLALNNAAHA) form the signal peptide. Positions 51–94 (TTYTVVAGDSLYKIALEHHLTLNQLYSYNPGVTPLIFPGDVISL) constitute a LysM domain. The Peptidase C51 domain maps to 158–279 (VPTVPVAHNY…LNPGKYNYIH (122 aa)).

It carries out the reaction Hydrolyzes the link between N-acetylmuramoyl residues and L-amino acid residues in certain cell-wall glycopeptides.. Its function is as follows. Has weak lytic activity toward S.aureus cells. In Staphylococcus aureus (strain NCTC 8325 / PS 47), this protein is Probable autolysin LDP.